The sequence spans 374 residues: Resuscitation-promoting factor Rpf2 (374 aa).

Residues 1 to 40 form the signal peptide; it reads MAPHQKSRINRINSTRSVPLRLATGGVLATLLIGGVTAAA. Positions 210–290 constitute a G5 domain; sequence IDRVDNTEIT…PATISRGTKT (81 aa). Positions 228-252 are disordered; it reads PTYVDDPEAPAGDETVVEEGAPGTK.

It belongs to the transglycosylase family. Rpf subfamily. Glycosylated; by Pmt, by at least mannose and galactose. Other unidentified sugars may also be present. Post-translationally, may be subject to proteolytic cleavage as multiple shorter forms are detected in gels. In terms of processing, at least 3 non-glycosylated protein isoforms of 35, 40 and 42 kDa are seen in gels.

Its subcellular location is the secreted. The protein resides in the cell surface. In terms of biological role, factor that stimulates resuscitation of dormant cells. Has peptidoglycan (PG) hydrolytic activity. Active in the pM concentration range. Has little to no effect on actively-growing cells. PG fragments could either directly activate the resuscitation pathway of dormant bacteria or serve as a substrate for endogenous Rpf, resulting in low molecular weight products with resuscitation activity. This is Resuscitation-promoting factor Rpf2 (rpf2) from Corynebacterium glutamicum (strain ATCC 13032 / DSM 20300 / JCM 1318 / BCRC 11384 / CCUG 27702 / LMG 3730 / NBRC 12168 / NCIMB 10025 / NRRL B-2784 / 534).